Consider the following 477-residue polypeptide: Cytochrome c oxidase subunit 1 (477 aa).

Residues 16–36 traverse the membrane as a helical segment; that stretch reads VGTMYLMLGMWSGFGGLNLSW. Positions 41 and 46 each coordinate Ca(2+). Position 62 (H62) interacts with Fe(II)-heme a. Helical transmembrane passes span 64–84, 101–121, 149–171, 185–205, 236–256, and 269–289; these read IMMIFSFVMPVLIGGFGNWLL, FSFWVLPPALYLVIVSCFIDY, ILGLHLAGISSSAESINYLVTFL, LFVWALAVTSFLLLVSLPVLA, LFWFFGHPEVYVLILPGFGLV, and VFGSVAMMYAMISIGVLGFIV. H242 is a binding site for Cu cation. The 1'-histidyl-3'-tyrosine (His-Tyr) cross-link spans 242–246; it reads HPEVY. Y246 serves as a coordination point for O2. Cu cation is bound by residues H292 and H293. A run of 2 helical transmembrane segments spans residues 309–329 and 340–360; these read AVTMLIAVPTGVKVFSWIATI and TLWVLGFIMKFTMGGITGVIL. Mg(2+) is bound by residues H370 and D371. H378 lines the heme a3 pocket. H380 is a Fe(II)-heme a binding site. 2 consecutive transmembrane segments (helical) span residues 382–402 and 416–436; these read VLSMGAVFTIFAGYIHYFPFF and FFLTFVGVNLTFFPQHFLGLG. Residue P443 coordinates Ca(2+). The helical transmembrane segment at 455–475 threads the bilayer; the sequence is WSTIGCAMVMVSVSLFIHMQW.

The protein belongs to the heme-copper respiratory oxidase family. In terms of assembly, component of the cytochrome c oxidase (complex IV, CIV), a multisubunit enzyme composed of a catalytic core of 3 subunits and several supernumerary subunits. The complex exists as a monomer or a dimer and forms supercomplexes (SCs) in the inner mitochondrial membrane with ubiquinol-cytochrome c oxidoreductase (cytochrome b-c1 complex, complex III, CIII). The cofactor is heme. Requires Cu cation as cofactor.

The protein resides in the mitochondrion inner membrane. It catalyses the reaction 4 Fe(II)-[cytochrome c] + O2 + 8 H(+)(in) = 4 Fe(III)-[cytochrome c] + 2 H2O + 4 H(+)(out). The protein operates within energy metabolism; oxidative phosphorylation. Its function is as follows. Component of the cytochrome c oxidase, the last enzyme in the mitochondrial electron transport chain which drives oxidative phosphorylation. The respiratory chain contains 3 multisubunit complexes succinate dehydrogenase (complex II, CII), ubiquinol-cytochrome c oxidoreductase (cytochrome b-c1 complex, complex III, CIII) and cytochrome c oxidase (complex IV, CIV), that cooperate to transfer electrons derived from NADH and succinate to molecular oxygen, creating an electrochemical gradient over the inner membrane that drives transmembrane transport and the ATP synthase. Cytochrome c oxidase is the component of the respiratory chain that catalyzes the reduction of oxygen to water. Electrons originating from reduced cytochrome c in the intermembrane space (IMS) are transferred via the dinuclear copper A center (CU(A)) of subunit 2 and heme A of subunit 1 to the active site in subunit 1, a binuclear center (BNC) formed by heme A3 and copper B (CU(B)). The BNC reduces molecular oxygen to 2 water molecules using 4 electrons from cytochrome c in the IMS and 4 protons from the mitochondrial matrix. This is Cytochrome c oxidase subunit 1 (COI) from Pecten maximus (King scallop).